The chain runs to 457 residues: Cystathionine beta-lyase, chloroplastic (457 aa).

A chloroplast-targeting transit peptide spans Met-1 to Cys-51. Pyridoxal 5'-phosphate contacts are provided by Tyr-120, Arg-122, Gly-150, Met-151, Ser-268, and Thr-270. An N6-(pyridoxal phosphate)lysine modification is found at Lys-271.

The protein belongs to the trans-sulfuration enzymes family. Forms homodimers. May form homotetramers from two homodimers. The cofactor is pyridoxal 5'-phosphate.

Its subcellular location is the plastid. The protein localises to the chloroplast. The catalysed reaction is L,L-cystathionine + H2O = L-homocysteine + pyruvate + NH4(+). The enzyme catalyses an S-substituted L-cysteine + H2O = a thiol + pyruvate + NH4(+). Its function is as follows. Catalyzes the degradation of cystathionine. This is Cystathionine beta-lyase, chloroplastic from Mimosa pudica (Sensitive plant).